The sequence spans 183 residues: Translation initiation factor IF-3 (183 aa).

It belongs to the IF-3 family. In terms of assembly, monomer.

Its subcellular location is the cytoplasm. In terms of biological role, IF-3 binds to the 30S ribosomal subunit and shifts the equilibrium between 70S ribosomes and their 50S and 30S subunits in favor of the free subunits, thus enhancing the availability of 30S subunits on which protein synthesis initiation begins. This Yersinia enterocolitica serotype O:8 / biotype 1B (strain NCTC 13174 / 8081) protein is Translation initiation factor IF-3.